The following is a 217-amino-acid chain: TLD domain-containing protein 2 (217 aa).

Positions 1–48 are disordered; that stretch reads MKSLRWRYTRLPSQVEDALSGEEDKEEEEEKEEETTPAPTPVPEHPMV. A compositionally biased stretch (acidic residues) spans 19–35; it reads LSGEEDKEEEEEKEEET. The region spanning 56–217 is the TLDc domain; the sequence is QVLGASEMSQ…ISELEAWVLS (162 aa).

Belongs to the OXR1 family.

This is TLD domain-containing protein 2 (TLDC2) from Bos taurus (Bovine).